Reading from the N-terminus, the 478-residue chain is Cytochrome c-552 (478 aa).

The N-terminal stretch at 1–26 (MTRIKINARRIFSLLIPFFFFTSVHA) is a signal peptide. His94 is a binding site for heme c. 3 residues coordinate heme: Cys122, Cys125, and Lys126. Cys160, Cys163, His164, Cys209, Cys212, and His213 together coordinate heme c. Residues Glu215, Tyr216, Lys261, and Gln263 each contribute to the Ca(2+) site. Tyr216 serves as a coordination point for substrate. His264 serves as a coordination point for substrate. The heme c site is built by His275, Cys282, Cys285, His286, His301, Cys314, Cys317, His318, and His393.

The protein belongs to the cytochrome c-552 family. The cofactor is Ca(2+). Heme c is required as a cofactor.

It is found in the periplasm. It carries out the reaction 6 Fe(III)-[cytochrome c] + NH4(+) + 2 H2O = 6 Fe(II)-[cytochrome c] + nitrite + 8 H(+). The protein operates within nitrogen metabolism; nitrate reduction (assimilation). Functionally, catalyzes the reduction of nitrite to ammonia, consuming six electrons in the process. This is Cytochrome c-552 from Escherichia coli O9:H4 (strain HS).